A 265-amino-acid chain; its full sequence is MRILVSNDDGIYSPGLWALVKRLKEVGEVIVVAPDREQSATGTQVTLRQPLRVQKTHPLIPGIEAYAVEGSPCDCVILGLAKLITEPVDLVVSGINHGLNLGDDVLISGTVGAALQGYLRNIPSIAISIPVTMEEPENLDSAACITAEVARRIQNGDITKNSFLNINIPDLPLSQIEELRVTPLAHKTHIETVEEGHDGRKRYFWLRRRQLSSADNKKTDIWAIENGYITISALHERLFQQPVFTLKDAETAGILAAARSCQDKI.

A divalent metal cation-binding residues include Asp-8, Asp-9, Ser-39, and Asn-96.

It belongs to the SurE nucleotidase family. The cofactor is a divalent metal cation.

Its subcellular location is the cytoplasm. The enzyme catalyses a ribonucleoside 5'-phosphate + H2O = a ribonucleoside + phosphate. Functionally, nucleotidase that shows phosphatase activity on nucleoside 5'-monophosphates. The chain is 5'-nucleotidase SurE from Dehalococcoides mccartyi (strain CBDB1).